A 412-amino-acid chain; its full sequence is 2,3-bisphosphoglycerate-independent phosphoglycerate mutase (412 aa).

This sequence belongs to the BPG-independent phosphoglycerate mutase family. A-PGAM subfamily.

The enzyme catalyses (2R)-2-phosphoglycerate = (2R)-3-phosphoglycerate. It participates in carbohydrate degradation; glycolysis; pyruvate from D-glyceraldehyde 3-phosphate: step 3/5. Its function is as follows. Catalyzes the interconversion of 2-phosphoglycerate and 3-phosphoglycerate. The protein is 2,3-bisphosphoglycerate-independent phosphoglycerate mutase (apgM) of Pyrococcus horikoshii (strain ATCC 700860 / DSM 12428 / JCM 9974 / NBRC 100139 / OT-3).